The primary structure comprises 90 residues: Protein AF1q (90 aa).

Positions 24 to 32 (LSELEGLGL) match the Nuclear export signal motif. Serine 84 bears the Phosphoserine mark.

The protein belongs to the MLLT11 family. As to quaternary structure, interacts with HSPA8 and LAMP2 isoform A; the interaction may target MLLT11 for degradation via chaperone-mediated autophagy. Interacts with TCF7. Ubiquitinated, leading to degradation.

It is found in the nucleus. The protein resides in the cytoplasm. Its subcellular location is the cytoskeleton. It localises to the microtubule organizing center. The protein localises to the centrosome. Its function is as follows. Cofactor for the transcription factor TCF7. Involved in regulation of lymphoid development by driving multipotent hematopoietic progenitor cells towards a T-cell fate. This chain is Protein AF1q (MLLT11), found in Pongo abelii (Sumatran orangutan).